Here is a 216-residue protein sequence, read N- to C-terminus: Probable GTP-binding protein EngB (216 aa).

The EngB-type G domain maps to 30–204 (DGLEVAFAGR…HDVLARWLGL (175 aa)). Residues 38–45 (GRSNAGKS), 64–68 (GRTQL), 82–85 (DLPG), 149–152 (TKAD), and 182–185 (LFSA) contribute to the GTP site. Positions 45 and 66 each coordinate Mg(2+).

The protein belongs to the TRAFAC class TrmE-Era-EngA-EngB-Septin-like GTPase superfamily. EngB GTPase family. Requires Mg(2+) as cofactor.

In terms of biological role, necessary for normal cell division and for the maintenance of normal septation. The chain is Probable GTP-binding protein EngB from Azotobacter vinelandii (strain DJ / ATCC BAA-1303).